A 162-amino-acid polypeptide reads, in one-letter code: Phosphopantetheine adenylyltransferase (162 aa).

Ser-9 contributes to the substrate binding site. ATP is bound by residues 9-10 (SF) and His-17. The substrate site is built by Lys-41, Leu-73, and Lys-87. Residues 88 to 90 (GLR), Glu-98, and 123 to 129 (YAHLSSS) contribute to the ATP site.

It belongs to the bacterial CoaD family. In terms of assembly, homohexamer. Requires Mg(2+) as cofactor.

The protein resides in the cytoplasm. It catalyses the reaction (R)-4'-phosphopantetheine + ATP + H(+) = 3'-dephospho-CoA + diphosphate. It functions in the pathway cofactor biosynthesis; coenzyme A biosynthesis; CoA from (R)-pantothenate: step 4/5. Functionally, reversibly transfers an adenylyl group from ATP to 4'-phosphopantetheine, yielding dephospho-CoA (dPCoA) and pyrophosphate. The sequence is that of Phosphopantetheine adenylyltransferase from Symbiobacterium thermophilum (strain DSM 24528 / JCM 14929 / IAM 14863 / T).